Reading from the N-terminus, the 319-residue chain is Formimidoylglutamase (319 aa).

Residues H131, D154, H156, D158, C248, and D250 each coordinate Mn(2+).

The protein belongs to the arginase family. Mn(2+) is required as a cofactor.

The enzyme catalyses N-formimidoyl-L-glutamate + H2O = formamide + L-glutamate. The protein operates within amino-acid degradation; L-histidine degradation into L-glutamate; L-glutamate from N-formimidoyl-L-glutamate (hydrolase route): step 1/1. Its function is as follows. Catalyzes the conversion of N-formimidoyl-L-glutamate to L-glutamate and formamide. The chain is Formimidoylglutamase from Legionella pneumophila (strain Lens).